A 504-amino-acid polypeptide reads, in one-letter code: Maturase K (504 aa).

This sequence belongs to the intron maturase 2 family. MatK subfamily.

It is found in the plastid. Its subcellular location is the chloroplast. Functionally, usually encoded in the trnK tRNA gene intron. Probably assists in splicing its own and other chloroplast group II introns. This is Maturase K from Wollastonia biflora (Beach sunflower).